We begin with the raw amino-acid sequence, 435 residues long: Serine--tRNA ligase (435 aa).

Threonine 242–glutamate 244 provides a ligand contact to L-serine. Arginine 273–glutamate 275 is a binding site for ATP. L-serine is bound at residue glutamate 296. Glutamate 360 to serine 363 provides a ligand contact to ATP. Serine 396 serves as a coordination point for L-serine.

It belongs to the class-II aminoacyl-tRNA synthetase family. Type-1 seryl-tRNA synthetase subfamily. Homodimer. The tRNA molecule binds across the dimer.

It localises to the cytoplasm. It catalyses the reaction tRNA(Ser) + L-serine + ATP = L-seryl-tRNA(Ser) + AMP + diphosphate + H(+). It carries out the reaction tRNA(Sec) + L-serine + ATP = L-seryl-tRNA(Sec) + AMP + diphosphate + H(+). The protein operates within aminoacyl-tRNA biosynthesis; selenocysteinyl-tRNA(Sec) biosynthesis; L-seryl-tRNA(Sec) from L-serine and tRNA(Sec): step 1/1. In terms of biological role, catalyzes the attachment of serine to tRNA(Ser). Is also able to aminoacylate tRNA(Sec) with serine, to form the misacylated tRNA L-seryl-tRNA(Sec), which will be further converted into selenocysteinyl-tRNA(Sec). This Vibrio cholerae serotype O1 (strain ATCC 39541 / Classical Ogawa 395 / O395) protein is Serine--tRNA ligase.